We begin with the raw amino-acid sequence, 289 residues long: Release factor glutamine methyltransferase (289 aa).

S-adenosyl-L-methionine is bound by residues 122–126 (GVGSG), Asp145, Trp174, and Asn189. 189-192 (NPPY) contributes to the substrate binding site.

This sequence belongs to the protein N5-glutamine methyltransferase family. PrmC subfamily.

It catalyses the reaction L-glutaminyl-[peptide chain release factor] + S-adenosyl-L-methionine = N(5)-methyl-L-glutaminyl-[peptide chain release factor] + S-adenosyl-L-homocysteine + H(+). In terms of biological role, methylates the class 1 translation termination release factors RF1/PrfA and RF2/PrfB on the glutamine residue of the universally conserved GGQ motif. This chain is Release factor glutamine methyltransferase, found in Caulobacter vibrioides (strain ATCC 19089 / CIP 103742 / CB 15) (Caulobacter crescentus).